The chain runs to 166 residues: Protein E6 (166 aa).

Zinc fingers lie at residues 50 to 86 (CNFCGKFLSHLEACEFDDKRLSLIWKGHLVYACCRWC) and 123 to 159 (CQNCMRYLDSIEKLDICGRRLPFHKVRDSWKGICRLC).

This sequence belongs to the papillomaviridae E6 protein family. In terms of assembly, forms homodimers. Interacts with ubiquitin-protein ligase UBE3A/E6-AP; this interaction stimulates UBE3A ubiquitin activity. Interacts with host BAK1.

The protein resides in the host cytoplasm. It is found in the host nucleus. Its function is as follows. Plays a major role in the induction and maintenance of cellular transformation. E6 associates with host UBE3A/E6-AP ubiquitin-protein ligase and modulates its activity. Protects host keratinocytes from apoptosis by mediating the degradation of host BAK1. May also inhibit host immune response. This is Protein E6 from Homo sapiens (Human).